The following is an 856-amino-acid chain: MAP kinase phosphatase with leucine-rich repeats protein 3 (856 aa).

The segment covering methionine 1 to glycine 10 has biased composition (low complexity). 3 disordered regions span residues methionine 1–serine 24, valine 84–leucine 195, and aspartate 214–aspartate 326. Glycine 2 carries the N-myristoyl glycine lipid modification. Gly residues predominate over residues glycine 11–serine 24. Residues asparagine 90–glutamine 142 show a composition bias toward low complexity. Over residues glutamate 155–arginine 165 the composition is skewed to polar residues. 2 stretches are compositionally biased toward low complexity: residues glutamate 178–leucine 195 and glutamine 224–glutamine 243. Polar residues-rich tracts occupy residues isoleucine 254–isoleucine 265 and alanine 272–proline 281. The segment covering asparagine 306–asparagine 323 has biased composition (low complexity). LRR repeat units follow at residues lysine 344–isoleucine 365, glutamate 370–lysine 391, serine 392–glutamate 413, serine 416–isoleucine 437, asparagine 439–serine 461, glutamine 462–isoleucine 484, asparagine 485–valine 506, and asparagine 507–leucine 528. The interval asparagine 554 to asparagine 577 is disordered. Residues isoleucine 632–cysteine 773 enclose the Tyrosine-protein phosphatase domain. Cysteine 717 acts as the Phosphocysteine intermediate in catalysis. The interval isoleucine 810–lysine 856 is disordered.

It belongs to the protein-tyrosine phosphatase family. Non-receptor class dual specificity subfamily.

It carries out the reaction O-phospho-L-tyrosyl-[protein] + H2O = L-tyrosyl-[protein] + phosphate. It catalyses the reaction O-phospho-L-seryl-[protein] + H2O = L-seryl-[protein] + phosphate. The catalysed reaction is O-phospho-L-threonyl-[protein] + H2O = L-threonyl-[protein] + phosphate. Its function is as follows. Probable phosphatase with dual specificity toward Ser/Thr and Tyr-containing proteins. The polypeptide is MAP kinase phosphatase with leucine-rich repeats protein 3 (mpl3) (Dictyostelium discoideum (Social amoeba)).